An 820-amino-acid chain; its full sequence is Probable beta-glucosidase ARB_05654 (820 aa).

An N-terminal signal peptide occupies residues 1 to 18 (MLFRWCPLVALAIASGTA). N-linked (GlcNAc...) asparagine glycosylation is found at Asn62 and Asn276. Residue Asp304 is part of the active site. Asn339, Asn346, Asn465, Asn547, Asn566, Asn588, and Asn811 each carry an N-linked (GlcNAc...) asparagine glycan.

This sequence belongs to the glycosyl hydrolase 3 family.

The protein resides in the secreted. The catalysed reaction is Hydrolysis of terminal, non-reducing beta-D-glucosyl residues with release of beta-D-glucose.. Its pathway is glycan metabolism; cellulose degradation. Its function is as follows. Beta-glucosidases are one of a number of cellulolytic enzymes involved in the degradation of cellulosic biomass. Catalyzes the last step releasing glucose from the inhibitory cellobiose. This chain is Probable beta-glucosidase ARB_05654, found in Arthroderma benhamiae (strain ATCC MYA-4681 / CBS 112371) (Trichophyton mentagrophytes).